The chain runs to 315 residues: Solute carrier family 25 member 32 (315 aa).

3 Solcar repeats span residues 20–109 (HVRY…IKSY), 118–209 (LEAT…LKLK), and 222–306 (LSTV…VSHF). The next 6 membrane-spanning stretches (helical) occupy residues 26-43 (LVAG…LHPL), 89-106 (VWGA…YNAI), 123-143 (YLVS…PLWV), 186-203 (FVPG…FMAY), 227-243 (YISV…AATY), and 281-300 (GIAP…FVVY).

This sequence belongs to the mitochondrial carrier (TC 2.A.29) family.

Its subcellular location is the mitochondrion inner membrane. The enzyme catalyses FAD(in) = FAD(out). In terms of biological role, facilitates flavin adenine dinucleotide (FAD) translocation across the mitochondrial inner membrane into the mitochondrial matrix where it acts as a redox cofactor to assist flavoenzyme activities in fundamental metabolic processes including fatty acid beta-oxidation, amino acid and choline metabolism as well as mitochondrial electron transportation. In particular, provides FAD to DLD dehydrogenase of the glycine cleavage system, part of mitochondrial one-carbon metabolic pathway involved in neural tube closure in early embryogenesis. The polypeptide is Solute carrier family 25 member 32 (Macaca fascicularis (Crab-eating macaque)).